A 560-amino-acid polypeptide reads, in one-letter code: Nucleoprotein (560 aa).

The segment at 53 to 236 (MRKDKRTDTD…ITQEQSQINV (184 aa)) is binding site for the cap structure m7GTP. A disordered region spans residues 333 to 353 (LTDTGSPNHPPVRNGGSPRLS). Mn(2+)-binding residues include Asp379 and Glu381. 4 residues coordinate Zn(2+): Glu389, Cys496, His499, and Cys520. Residue Asp524 participates in Mn(2+) binding.

It belongs to the arenaviridae nucleocapsid protein family. In terms of assembly, homomultimerizes to form the nucleocapsid. Binds to viral genomic RNA. Interacts with glycoprotein G2. Interacts with protein Z; this interaction probably directs the encapsidated genome to budding sites. Interacts with protein L; this interaction does not interfere with Z-L interaction. Interacts with host IKBKE (via Protein kinase domain); the interaction inhibits IKBKE kinase activity.

The protein localises to the virion. The protein resides in the host cytoplasm. Encapsidates the genome, protecting it from nucleases. The encapsidated genomic RNA is termed the nucleocapsid (NC). Serves as template for viral transcription and replication. The increased presence of protein N in host cell does not seem to trigger the switch from transcription to replication as observed in other negative strain RNA viruses. Through the interaction with host IKBKE, strongly inhibits the phosphorylation and nuclear translocation of host IRF3, a protein involved in interferon activation pathway, leading to the inhibition of interferon-beta and IRF3-dependent promoters activation. Also encodes a functional 3'-5' exoribonuclease that degrades preferentially dsRNA substrates and thereby participates in the suppression of interferon induction. This is Nucleoprotein from Pirital mammarenavirus (isolate Rat/Venezuela/VAV-488/1995) (PIRV).